We begin with the raw amino-acid sequence, 73 residues long: Potassium channel toxin alpha-KTx 27.4 (73 aa).

A signal peptide spans 1 to 26 (MKFLFLTLVLLYFTAILVFIVFPSYA).

The protein belongs to the short scorpion toxin superfamily. Potassium channel inhibitor family. Alpha-KTx 27 subfamily. In terms of processing, contains 4 disulfide bonds. Expressed by the venom gland.

Its subcellular location is the secreted. The chain is Potassium channel toxin alpha-KTx 27.4 from Mesobuthus gibbosus (Mediterranean checkered scorpion).